Reading from the N-terminus, the 670-residue chain is E3 ubiquitin-protein ligase TRAF7 (670 aa).

2 disordered regions span residues 1–37 (MSSG…FGPA) and 49–97 (GTST…SLHS). Composition is skewed to polar residues over residues 15 to 31 (GPSN…TRME) and 49 to 67 (GTST…STLA). 3 positions are modified to phosphoserine: serine 61, serine 88, and serine 91. The RING-type zinc finger occupies 131-165 (CQLCCSVFKDPVITTCGHTFCRRCALKSEKCPVDN). The TRAF-type zinc-finger motif lies at 222–276 (HEGSCDYRPVRCPNNPSCPPLLRMNLEAHLKECEHIKCPHSKYGCTFIGNQDTYE). WD repeat units lie at residues 394-433 (GHQG…KCQK), 437-474 (GHDG…KVNT), 477-513 (AHDN…LKLK), 515-554 (ELTG…CIHV), 557-594 (TSGG…QVRT), 597-638 (GHVG…CTQT), and 641-669 (RHQG…KVWT).

The protein belongs to the WD repeat TRAF7 family. Homodimer. Interacts with MAP3K3 and promotes the kinase activity of this enzyme. Post-translationally, phosphorylated by MAP3K3. Ubiquitinates itself upon phosphorylation. As to expression, ubiquitously expressed with high levels in skeletal muscle, heart, colon, spleen, kidney, liver and placenta.

Its subcellular location is the cytoplasmic vesicle. The protein resides in the cytoplasm. It is found in the nucleus. The enzyme catalyses S-ubiquitinyl-[E2 ubiquitin-conjugating enzyme]-L-cysteine + [acceptor protein]-L-lysine = [E2 ubiquitin-conjugating enzyme]-L-cysteine + N(6)-ubiquitinyl-[acceptor protein]-L-lysine.. Its pathway is protein modification; protein ubiquitination. E3 ubiquitin and SUMO-protein ligase that plays a role in different biological processes such as innate immunity, inflammation or apoptosis. Potentiates MAP3K3-mediated activation of JUN/AP1 and DDIT3 transcriptional regulators. Negatively regulates MYB transcriptional activity by sequestering it to the cytosol via SUMOylation. Plays a role in the phosphorylation of MAPK1 and/or MAPK3, probably via its interaction with MAP3K3. Negatively regulates RLR-mediated innate immunity by promoting 'Lys-48'-linked ubiquitination of TBK1 through its RING domain to inhibit the cellular antiviral response. Promotes 'Lys-29'-linked polyubiquitination of NEMO/IKBKG and RELA leading to targeting these two proteins to lysosomal degradative pathways, reducing the transcriptional activity of NF-kappa-B. In Homo sapiens (Human), this protein is E3 ubiquitin-protein ligase TRAF7 (TRAF7).